Consider the following 310-residue polypeptide: Transcription initiation factor IIA subunit 1 (310 aa).

3 disordered regions span residues 52–78 (AISN…LSTV), 91–197 (IQLN…NNKD), and 218–261 (VIPQ…DDPD). Composition is skewed to low complexity over residues 62 to 77 (TTAT…TLST) and 122 to 160 (SNGT…PSSL). 3 stretches are compositionally biased toward acidic residues: residues 173-183 (TLDESDNDDDN), 225-236 (LNDDDDLDDEEI), and 246-261 (DSLG…DDPD).

The protein belongs to the TFIIA subunit 1 family. TFIIA is a heterodimer of the large subunit 1 and a small subunit gamma.

It localises to the nucleus. Its function is as follows. TFIIA is a component of the transcription machinery of RNA polymerase II and plays an important role in transcriptional activation. TFIIA in a complex with tbp mediates transcriptional activity. The sequence is that of Transcription initiation factor IIA subunit 1 (gtf2a1) from Dictyostelium discoideum (Social amoeba).